The chain runs to 366 residues: Phenylalanine--tRNA ligase alpha subunit (366 aa).

A Mg(2+)-binding site is contributed by Glu264.

It belongs to the class-II aminoacyl-tRNA synthetase family. Phe-tRNA synthetase alpha subunit type 1 subfamily. As to quaternary structure, tetramer of two alpha and two beta subunits. The cofactor is Mg(2+).

The protein resides in the cytoplasm. The enzyme catalyses tRNA(Phe) + L-phenylalanine + ATP = L-phenylalanyl-tRNA(Phe) + AMP + diphosphate + H(+). The sequence is that of Phenylalanine--tRNA ligase alpha subunit from Zymomonas mobilis subsp. mobilis (strain ATCC 31821 / ZM4 / CP4).